Consider the following 86-residue polypeptide: Sec-independent protein translocase protein TatA (86 aa).

The chain crosses the membrane as a helical span at residues 1 to 21 (MGGISIWQLLIIAVIVVLLFG). Positions 42–86 (AIGDDNQPQQAQKTSSDADFETKNITEKQSVAQSETSESKNKEQV) are disordered. Polar residues-rich tracts occupy residues 47–58 (NQPQQAQKTSSD) and 68–77 (EKQSVAQSET).

This sequence belongs to the TatA/E family. The Tat system comprises two distinct complexes: a TatABC complex, containing multiple copies of TatA, TatB and TatC subunits, and a separate TatA complex, containing only TatA subunits. Substrates initially bind to the TatABC complex, which probably triggers association of the separate TatA complex to form the active translocon.

It localises to the cell inner membrane. In terms of biological role, part of the twin-arginine translocation (Tat) system that transports large folded proteins containing a characteristic twin-arginine motif in their signal peptide across membranes. TatA could form the protein-conducting channel of the Tat system. This Photorhabdus laumondii subsp. laumondii (strain DSM 15139 / CIP 105565 / TT01) (Photorhabdus luminescens subsp. laumondii) protein is Sec-independent protein translocase protein TatA.